The following is a 572-amino-acid chain: E3 ubiquitin-protein ligase ZFP91 (572 aa).

Positions 1 to 12 (MPGETEEPRSPE) are enriched in basic and acidic residues. The interval 1 to 308 (MPGETEEPRS…PRLPKRRKKP (308 aa)) is disordered. The segment covering 61–70 (AAAAAAAAAA) has biased composition (low complexity). Basic residues predominate over residues 72–85 (SRRRKAEYPRRRRS). S86 and S106 each carry phosphoserine. Over residues 122-131 (LTTDKDPKEE) the composition is skewed to basic and acidic residues. Positions 143–162 (SITTTRASRSWRSSSRTSIS) are enriched in low complexity. Over residues 209 to 225 (SDEEEEEEEEMLISEEE) the composition is skewed to acidic residues. Composition is skewed to basic and acidic residues over residues 226–247 (IPFK…ETPK) and 254–271 (KVKE…VEVE). Positions 272–284 (VKEEENEIREDEE) are enriched in acidic residues. 5 C2H2-type zinc fingers span residues 313-338 (VRCE…KYQH), 344-368 (YVCP…AKHH), 374-396 (YICE…RMIH), 402-424 (LQCE…MKKH), and 432-455 (FSCN…AKSH). The tract at residues 340–370 (LKKKYVCPHPSCGRLFRLQKQLLRHAKHHTD) is interaction with MAP3K14/NIK.

It belongs to the krueppel C2H2-type zinc-finger protein family. As to quaternary structure, interacts with MAP3K14/NIK. As to expression, found in all the examined tissues including brain, heart, kidney, lung, liver, spleen, thymus, skeletal muscle, ovary and testis.

Its subcellular location is the nucleus. The catalysed reaction is S-ubiquitinyl-[E2 ubiquitin-conjugating enzyme]-L-cysteine + [acceptor protein]-L-lysine = [E2 ubiquitin-conjugating enzyme]-L-cysteine + N(6)-ubiquitinyl-[acceptor protein]-L-lysine.. The protein operates within protein modification; protein ubiquitination. Functionally, atypical E3 ubiquitin-protein ligase that mediates 'Lys-63'-linked ubiquitination of MAP3K14/NIK, leading to stabilize and activate MAP3K14/NIK. It thereby acts as an activator of the non-canonical NF-kappa-B2/NFKB2 pathway. May also play an important role in cell proliferation and/or anti-apoptosis. This is E3 ubiquitin-protein ligase ZFP91 (Zfp91) from Mus musculus (Mouse).